The chain runs to 236 residues: Peptidase E (236 aa).

Residues serine 122, aspartate 137, and histidine 159 each act as charge relay system in the active site.

Belongs to the peptidase S51 family.

The protein resides in the cytoplasm. It catalyses the reaction Dipeptidase E catalyzes the hydrolysis of dipeptides Asp-|-Xaa. It does not act on peptides with N-terminal Glu, Asn or Gln, nor does it cleave isoaspartyl peptides.. Functionally, hydrolyzes dipeptides containing N-terminal aspartate residues. May play a role in allowing the cell to use peptide aspartate to spare carbon otherwise required for the synthesis of the aspartate family of amino acids. The sequence is that of Peptidase E from Shewanella sp. (strain ANA-3).